Consider the following 156-residue polypeptide: Aspercryptin biosynthesis cluster protein B (156 aa).

Residues 1 to 39 form the signal peptide; sequence MRMANRIGAGRKSALQLSHLRTRLTSSAAAVATAPTLDP.

Belongs to the YciI family.

The protein operates within secondary metabolite biosynthesis. Part of the gene cluster that mediates the biosynthesis of aspercryptins, linear lipopeptides built from six amino acids including 2 highly unusual and nonproteogenic amino acids, 2-amino-octanoic acid (2aoa) and 2-amino-dodecanol (2adol). The core structure of aspercryptins is as follows: Ser/Ala-Thr-Ile/Val-2aoa-Aasn-2adol. The first step of aspercryptin biosynthesis is the generation of the fatty acid precursors, octanoic and dodecanoic acids, by the FAS subunits atnF and atnM. The fatty acid precursors are likely transformed into the corresponding alpha-amino fatty acids in three steps. First, they are hydroxylated by the cytochrome P450 monooxygenase atnE, then oxidized to the corresponding alpha-keto acids by the NAD(P)-dependent oxidoreductase atnD, and finally converted to the alpha-amino fatty acids by the PLP-dependent aminotransferases atnH or atnJ. the alpha-amino fatty acids, 2-amino-octanoic and 2-amino-dodecanoic acids, are recognized, activated, and covalently tethered to the NRPS atnA by its fourth and sixth adenylation domains. The second module of atnA is the Thr module and contains an epimerase (E) domain responsible for the epimerization of Thr to D-allo-Thr. Additionally, despite atnA having only one epimerase domain, the first amino acid of aspercryptin A1 is D-Ser, suggesting that serine is either loaded directly as D-Ser on the first module or that the epimerase domain in the threonine module epimerizes both L-Ser and L-Thr. After condensation of the hexapeptide of aspercryptin, the C-terminal reductase (TE) domain might be involved in the reductive release and production of the aldehyde hexapeptide. Further reduction would generate aspercryptins. The variety of aspercryptins produced reflects the flexibility of the atnA NRPS, allowing incorporation of alanine instead of serine, valine for isoleucine, and a C10 fatty amino alcohol instead of the C12 version. AtnB seems to be involved in the selectivity for Ile versus Val by the third module. Moreover, type B, C and D aspercryptins have an additional N-terminal cichorine, acetyl and propionyl group respectively. The polypeptide is Aspercryptin biosynthesis cluster protein B (Emericella nidulans (strain FGSC A4 / ATCC 38163 / CBS 112.46 / NRRL 194 / M139) (Aspergillus nidulans)).